A 110-amino-acid chain; its full sequence is Suppressor of silencing 2b (110 aa).

Residues 16–45 (ARMVEAKKQRRRSHKQNRRERGHKSPSERA) are disordered. Positions 22–27 (KKQRRR) match the Nuclear localization signal motif. Positions 23-37 (KQRRRSHKQNRRERG) are enriched in basic residues.

Belongs to the cucumovirus/ilarvirus protein 2b family. As to quaternary structure, homotetramer. Interacts with host AGO1; this interaction blocks AGO1 cleavage activity to attenuate RNA silencing and thus counter host defense. Interacts with host JAZ.

It is found in the host nucleus. Functionally, multifunctional protein that plays two independent roles: viral suppressor of host RNAi (VSR) and viral inducer of host attractiveness to insect vectors (VIA). Acts as a suppressor of RNA-mediated gene silencing, also known as post-transcriptional gene silencing (PTGS), a mechanism of plant viral defense that limits the accumulation of viral RNAs. May directly interfere with mobile silencing signaling. Also inhibits signal transduction by the phytohormone jasmonate, making the infected plant more attractive to aphids, which are the second host to play a role as a dissemination vector. Acts by binding to and inhibiting JAZ degradation in the host. This Cucurbita pepo (Vegetable marrow) protein is Suppressor of silencing 2b.